We begin with the raw amino-acid sequence, 1040 residues long: Multidrug resistance protein MdtB (1040 aa).

12 helical membrane passes run 25–45 (LLMA…PVAA), 347–367 (LMLA…NIPA), 369–389 (IIPG…MVFL), 396–416 (LTLM…IVVI), 440–460 (IGFT…PLLF), 472–492 (FAVT…TLTP), 537–557 (WLTL…WIVI), 863–883 (LGST…VLGV), 888–908 (FIHP…ALLA), 910–930 (IIAG…LIGI), 968–988 (ILMT…STGV), and 998–1018 (IAMV…TPVI).

Belongs to the resistance-nodulation-cell division (RND) (TC 2.A.6) family. MdtB subfamily. Part of a tripartite efflux system composed of MdtA, MdtB and MdtC. MdtB forms a heteromultimer with MdtC.

Its subcellular location is the cell inner membrane. The protein is Multidrug resistance protein MdtB of Salmonella paratyphi B (strain ATCC BAA-1250 / SPB7).